A 1447-amino-acid chain; its full sequence is Bud site selection protein 4 (1447 aa).

Residues 1-16 (MHDAESTVDSLLKEID) show a composition bias toward basic and acidic residues. 2 disordered regions span residues 1–38 (MHDA…PHNW) and 57–76 (NTRS…KMST). Serine 10 is subject to Phosphoserine. Polar residues-rich tracts occupy residues 22 to 32 (TKSNITQNGSE) and 59 to 76 (RSNA…KMST). 5 positions are modified to phosphoserine: serine 78, serine 81, serine 91, serine 96, and serine 167. The tract at residues 272 to 316 (NLPSKLLNTSNNSHSDSRSPTASVEDLNISTNLPGADSSQNNPVT) is disordered. Residues 277 to 316 (LLNTSNNSHSDSRSPTASVEDLNISTNLPGADSSQNNPVT) are compositionally biased toward polar residues. At threonine 365 the chain carries Phosphothreonine. A Phosphoserine modification is found at serine 367. A disordered region spans residues 444–479 (HQESEHANEQPAIIPQKDSSEETFTELNNESEFQRN). Serine 511 is modified (phosphoserine). A disordered region spans residues 529-591 (KTSAEEHDLS…NEEPEHVPLL (63 aa)). The segment covering 538–548 (SSSCEDQSVSE) has biased composition (polar residues). The span at 549–580 (ARNKDRIEEKEVETKDENIETEKDESEYHKVE) shows a compositional bias: basic and acidic residues. Serine 616 is modified (phosphoserine). The span at 648-664 (ANSQFSQQSSITTASTV) shows a compositional bias: polar residues. The disordered stretch occupies residues 648-673 (ANSQFSQQSSITTASTVDSKKDNGST). The interval 768-879 (EHENIPLSTH…SLWESSYELK (112 aa)) is interaction with IQG1. Residues serine 805 and serine 811 each carry the phosphoserine modification. The PH domain maps to 1302–1413 (NIYKEGYLLQ…WYNKLQEVVE (112 aa)).

Interacts with AXL1, AXL2, IQG1 and SEC3. Phosphorylated by CDC28.

It localises to the bud neck. Its function is as follows. Required for establishment of the axial budding pattern in haploid cells. Cooperates with other bud site selection proteins to recognize a spatial landmark during mitosis and they subsequently become a landmark for downstream polarity establishment factors that coordinate axial budding and cytokinesis. Involved in the septin organization at the bud neck. This is Bud site selection protein 4 (BUD4) from Saccharomyces cerevisiae (strain ATCC 204508 / S288c) (Baker's yeast).